A 274-amino-acid polypeptide reads, in one-letter code: N-acetylmuramic acid 6-phosphate etherase (274 aa).

The SIS domain occupies 52–215 (IIPRMEQGGR…STSIMIRLGR (164 aa)). The Proton donor role is filled by E80. Residue E111 is part of the active site.

Belongs to the GCKR-like family. MurNAc-6-P etherase subfamily. Homodimer.

It catalyses the reaction N-acetyl-D-muramate 6-phosphate + H2O = N-acetyl-D-glucosamine 6-phosphate + (R)-lactate. It functions in the pathway amino-sugar metabolism; N-acetylmuramate degradation. Functionally, specifically catalyzes the cleavage of the D-lactyl ether substituent of MurNAc 6-phosphate, producing GlcNAc 6-phosphate and D-lactate. This Porphyromonas gingivalis (strain ATCC BAA-308 / W83) protein is N-acetylmuramic acid 6-phosphate etherase.